The sequence spans 172 residues: Small ribosomal subunit protein uS5 (172 aa).

The S5 DRBM domain maps to 17-80 (LKEKMIAINR…EEARRNMTKV (64 aa)).

This sequence belongs to the universal ribosomal protein uS5 family. In terms of assembly, part of the 30S ribosomal subunit. Contacts proteins S4 and S8.

Its function is as follows. With S4 and S12 plays an important role in translational accuracy. Located at the back of the 30S subunit body where it stabilizes the conformation of the head with respect to the body. The sequence is that of Small ribosomal subunit protein uS5 from Polaromonas naphthalenivorans (strain CJ2).